The primary structure comprises 473 residues: Hyaluronidase-2 (473 aa).

The signal sequence occupies residues 1–20 (MRAGLGPIITLALVLEVAWA). 2 disulfide bridges follow: Cys47–Cys340 and Cys211–Cys227. N-linked (GlcNAc...) asparagine glycosylation is found at Asn74 and Asn103. Residue Glu135 is the Proton donor of the active site. The N-linked (GlcNAc...) asparagine glycan is linked to Asn357. The 79-residue stretch at 361 to 439 (ATQYCSWTQC…YLGWGGEQCQ (79 aa)) folds into the EGF-like domain. Disulfide bonds link Cys365–Cys376, Cys370–Cys427, and Cys429–Cys438. Asp448 carries GPI-anchor amidated aspartate lipidation. Positions 449 to 473 (ASRAWAGAHLASLLGLVAMTLTWTL) are cleaved as a propeptide — removed in mature form.

The protein belongs to the glycosyl hydrolase 56 family. Interacts with MST1R.

It is found in the cell membrane. The catalysed reaction is Random hydrolysis of (1-&gt;4)-linkages between N-acetyl-beta-D-glucosamine and D-glucuronate residues in hyaluronate.. Its function is as follows. Catalyzes hyaluronan degradation into small fragments that are endocytosed and degraded in lysosomes by HYAL1 and exoglycosidases. Essential for the breakdown of extracellular matrix hyaluronan. This is Hyaluronidase-2 (Hyal2) from Rattus norvegicus (Rat).